The following is a 364-amino-acid chain: O-methyltransferase 1 (364 aa).

5 residues coordinate S-adenosyl-L-homocysteine: serine 183, glycine 207, aspartate 230, aspartate 250, and lysine 264. Residue aspartate 230 coordinates S-adenosyl-L-methionine. Histidine 268 functions as the Proton acceptor in the catalytic mechanism.

This sequence belongs to the class I-like SAM-binding methyltransferase superfamily. Cation-independent O-methyltransferase family. In terms of assembly, homodimer.

The catalysed reaction is dopamine + S-adenosyl-L-methionine = 3-methoxytyramine + S-adenosyl-L-homocysteine + H(+). It catalyses the reaction 3,4-dihydroxy-5-methoxyphenethylamine + S-adenosyl-L-methionine = 4-hydroxy-3,5-dimethoxyphenethylamine + S-adenosyl-L-homocysteine + H(+). Its pathway is aromatic compound metabolism. The protein operates within alkaloid biosynthesis. O-methyltransferase participating in the biosynthesis of natural products derived from phenylethylamine, including mescaline, a natural hallucinogen potentially used in psychotherapeutic treatments. Catalyzes the O-methylation of mescaline meta hydroxyl groups, using dopamine and 3,4-dihydroxy-5-methoxyphenethylamine as substrates. The chain is O-methyltransferase 1 from Lophophora williamsii (Peyote).